A 779-amino-acid polypeptide reads, in one-letter code: Protein zer-1 homolog (779 aa).

A2 carries the post-translational modification N-acetylalanine. LRR repeat units follow at residues 226–245 (SLVL…IVQL), 246–281 (HKLR…KLTR), and 291–315 (LGNL…KTDE). 5 ARM repeats span residues 440-480 (RSEQ…NFSI), 524-569 (DNDH…NITD), 571-613 (TPDN…NVAE), 615-656 (KELR…HIMF), and 727-769 (PDKY…HCSN).

Belongs to the zyg-11 family. As to quaternary structure, interacts with the ELOC-ELOB/Elongin BC complex. Part of an E3 ubiquitin ligase complex including ZER1, CUL2 and Elongin BC.

Functionally, serves as substrate adapter subunit in the E3 ubiquitin ligase complex ZYG11B-CUL2-Elongin BC. Acts redudantly with ZYG11B to target substrates bearing N-terminal glycine degrons for proteasomal degradation. Involved in the clearance of proteolytic fragments generated by caspase cleavage during apoptosis since N-terminal glycine degrons are strongly enriched at caspase cleavage sites. Also important in the quality control of protein N-myristoylation in which N-terminal glycine degrons are conditionally exposed after a failure of N-myristoylation. The sequence is that of Protein zer-1 homolog from Mus musculus (Mouse).